Here is a 1027-residue protein sequence, read N- to C-terminus: Error-prone DNA polymerase (1027 aa).

This sequence belongs to the DNA polymerase type-C family. DnaE2 subfamily.

It is found in the cytoplasm. It carries out the reaction DNA(n) + a 2'-deoxyribonucleoside 5'-triphosphate = DNA(n+1) + diphosphate. In terms of biological role, DNA polymerase involved in damage-induced mutagenesis and translesion synthesis (TLS). It is not the major replicative DNA polymerase. In Dechloromonas aromatica (strain RCB), this protein is Error-prone DNA polymerase.